The chain runs to 68 residues: Acylphosphatase (68 aa).

The region spanning 3–68 is the Acylphosphatase-like domain; that stretch reads RIACTVHGRV…RCTAGLPSAP (66 aa). Residues Arg-18 and Asn-36 contribute to the active site.

The protein belongs to the acylphosphatase family.

It catalyses the reaction an acyl phosphate + H2O = a carboxylate + phosphate + H(+). In Oleidesulfovibrio alaskensis (strain ATCC BAA-1058 / DSM 17464 / G20) (Desulfovibrio alaskensis), this protein is Acylphosphatase (acyP).